The primary structure comprises 1063 residues: Probable hemoglobin and hemoglobin-haptoglobin-binding protein 1 (1063 aa).

A signal peptide spans Met1–Ala24. Repeat copies occupy residues Gln26–Asn29, Gln30–Asn33, Gln34–Asn37, Gln38–Asn41, Gln42–Asn45, Gln46–Asn49, and Gln50–Asn53. The 7 X 4 AA tandem repeats of Q-P-T-N stretch occupies residues Gln26–Asn53. A compositionally biased stretch (low complexity) spans Thr28–Asn55. The segment at Thr28 to Asn57 is disordered. The TonB box signature appears at Glu63–Ser70. A TBDR plug domain is found at Asn66–Lys200. The region spanning Asp208–Phe1063 is the TBDR beta-barrel domain. Residues Asn1046 to Phe1063 carry the TonB C-terminal box motif.

The protein belongs to the TonB-dependent receptor family. Hemoglobin/haptoglobin binding protein subfamily.

Its subcellular location is the cell outer membrane. In terms of biological role, acts as a receptor for hemoglobin or the hemoglobin/haptoglobin complex of the human host and is required for heme uptake. The sequence is that of Probable hemoglobin and hemoglobin-haptoglobin-binding protein 1 from Haemophilus influenzae (strain ATCC 51907 / DSM 11121 / KW20 / Rd).